The primary structure comprises 633 residues: DNA topoisomerase 4 subunit B (633 aa).

Residues Tyr-5, Asn-45, Asp-72, 113–119, and Lys-337 contribute to the ATP site; that span reads GLHGVGA. In terms of domain architecture, Toprim spans 419–534; the sequence is KELFIVEGDS…LGHVYLALPP (116 aa). Mg(2+)-binding residues include Glu-425, Asp-499, and Asp-501.

This sequence belongs to the type II topoisomerase family. ParE type 2 subfamily. In terms of assembly, heterotetramer composed of ParC and ParE. Mg(2+) is required as a cofactor. It depends on Mn(2+) as a cofactor. The cofactor is Ca(2+).

The catalysed reaction is ATP-dependent breakage, passage and rejoining of double-stranded DNA.. Functionally, topoisomerase IV is essential for chromosome segregation. It relaxes supercoiled DNA. Performs the decatenation events required during the replication of a circular DNA molecule. The protein is DNA topoisomerase 4 subunit B of Mycoplasma genitalium (strain ATCC 33530 / DSM 19775 / NCTC 10195 / G37) (Mycoplasmoides genitalium).